The primary structure comprises 342 residues: MTNSLFRQSFLSDTLNMQQSVEAKATTLSNGVRLQLHQRGVLEVIPANNSAETKNIILSSGIHGDETAPMELIDKIVHDIETGFQDVQARCLFIIAHPEATNAHTRFIEENLNRLFDEKEHQPSKELVIADQLKLLVKAFFDNTPVESRWHLDLHCAIRASKHYSFAISPKTRHPTRSKALVDFVNHSHVEALLLSNSPSSTFSWFSAEYYSAQALTMELGRVARIGENDLSRFTALDLTMRDLIAEVTPEHLPKPAITYRVSRTIVRLHQDFDFRFDDQVENFTSFMHGEVFGHDGDKPLMAKNDNEAIVFPNRNVAIGQRAALMVCEIKARFEDDQLVYD.

3 residues coordinate Zn(2+): histidine 63, glutamate 66, and histidine 155. Residue glutamate 219 is part of the active site.

It belongs to the AspA/AstE family. Succinylglutamate desuccinylase subfamily. The cofactor is Zn(2+).

The catalysed reaction is N-succinyl-L-glutamate + H2O = L-glutamate + succinate. It functions in the pathway amino-acid degradation; L-arginine degradation via AST pathway; L-glutamate and succinate from L-arginine: step 5/5. Transforms N(2)-succinylglutamate into succinate and glutamate. The sequence is that of Succinylglutamate desuccinylase from Vibrio vulnificus (strain YJ016).